The sequence spans 174 residues: Protein GrpE (174 aa).

The segment at 1-35 is disordered; it reads MAQDIKNEEVEEVQEEEVVKTAEETTPEKSELDLA. Positions 17 to 35 are enriched in basic and acidic residues; sequence EVVKTAEETTPEKSELDLA.

This sequence belongs to the GrpE family. In terms of assembly, homodimer.

The protein resides in the cytoplasm. Its function is as follows. Participates actively in the response to hyperosmotic and heat shock by preventing the aggregation of stress-denatured proteins, in association with DnaK and GrpE. It is the nucleotide exchange factor for DnaK and may function as a thermosensor. Unfolded proteins bind initially to DnaJ; upon interaction with the DnaJ-bound protein, DnaK hydrolyzes its bound ATP, resulting in the formation of a stable complex. GrpE releases ADP from DnaK; ATP binding to DnaK triggers the release of the substrate protein, thus completing the reaction cycle. Several rounds of ATP-dependent interactions between DnaJ, DnaK and GrpE are required for fully efficient folding. The chain is Protein GrpE from Streptococcus pneumoniae serotype 4 (strain ATCC BAA-334 / TIGR4).